The chain runs to 237 residues: Myelin protein zero-like protein 3 (237 aa).

The signal sequence occupies residues 1 to 32 (MQLARGTVGGRGCALFPLLSILVVQGARIVLS). Positions 33-149 (LEISADAHVR…NIPLTELTVT (117 aa)) constitute an Ig-like V-type domain. Over 33 to 159 (LEISADAHVR…ERGFGTMLSS (127 aa)) the chain is Extracellular. Cys53 and Cys129 are joined by a disulfide. An N-linked (GlcNAc...) asparagine glycan is attached at Asn124. The helical transmembrane segment at 160–180 (VALLSILVFVPSAVVVILLLV) threads the bilayer. Over 181–237 (RMGRKATGVQKRSRSGYKKSSIEVSDDTDQEDSNDCMTRLCVRCAECLDSDYEEEAY) the chain is Cytoplasmic.

It belongs to the myelin P0 protein family. In terms of tissue distribution, present in all tissues tested, including the skin. Present in the keratinocytes and sebocytes in the skin (at protein level).

Its subcellular location is the membrane. Mediates homophilic cell-cell adhesion. The polypeptide is Myelin protein zero-like protein 3 (Mpzl3) (Mus musculus (Mouse)).